The sequence spans 422 residues: UDP-N-acetylglucosamine 1-carboxyvinyltransferase (422 aa).

22–23 (KN) serves as a coordination point for phosphoenolpyruvate. Arg-92 serves as a coordination point for UDP-N-acetyl-alpha-D-glucosamine. The active-site Proton donor is Cys-116. A 2-(S-cysteinyl)pyruvic acid O-phosphothioketal modification is found at Cys-116. Residues 121–125 (RPVDQ), Asp-305, and Ile-327 contribute to the UDP-N-acetyl-alpha-D-glucosamine site.

It belongs to the EPSP synthase family. MurA subfamily.

It localises to the cytoplasm. The enzyme catalyses phosphoenolpyruvate + UDP-N-acetyl-alpha-D-glucosamine = UDP-N-acetyl-3-O-(1-carboxyvinyl)-alpha-D-glucosamine + phosphate. Its pathway is cell wall biogenesis; peptidoglycan biosynthesis. Cell wall formation. Adds enolpyruvyl to UDP-N-acetylglucosamine. This Sorangium cellulosum (strain So ce56) (Polyangium cellulosum (strain So ce56)) protein is UDP-N-acetylglucosamine 1-carboxyvinyltransferase.